Consider the following 122-residue polypeptide: Large ribosomal subunit protein uL14 (122 aa).

The protein belongs to the universal ribosomal protein uL14 family. Part of the 50S ribosomal subunit. Forms a cluster with proteins L3 and L19. In the 70S ribosome, L14 and L19 interact and together make contacts with the 16S rRNA in bridges B5 and B8.

In terms of biological role, binds to 23S rRNA. Forms part of two intersubunit bridges in the 70S ribosome. The chain is Large ribosomal subunit protein uL14 from Nautilia profundicola (strain ATCC BAA-1463 / DSM 18972 / AmH).